A 515-amino-acid polypeptide reads, in one-letter code: Cyclic AMP receptor-like protein G (515 aa).

Residues 1 to 16 are Extracellular-facing; it reads MSSIIFIPNDADNINS. Residues 17 to 37 traverse the membrane as a helical segment; it reads IMVTISSSLSLVGCLFILSIY. The Cytoplasmic segment spans residues 38 to 50; that stretch reads IYYKELREFQLKL. A helical transmembrane segment spans residues 51–71; it reads IFIMTINDFIISIIFLIATHI. Over 72–92 the chain is Extracellular; sequence QTKYFDAITNVFPFFCNFPDS. The chain crosses the membrane as a helical span at residues 93–113; sequence LLHYFFLSSFFWEVCIAHTLI. The Cytoplasmic portion of the chain corresponds to 114–129; it reads QVIKYNNDKVEDNLKK. A helical membrane pass occupies residues 130-150; that stretch reads YFIFSNGLSALIMVSLFFIRS. Residues 151–164 are Extracellular-facing; the sequence is YSKIDCHHDSIFPH. A helical transmembrane segment spans residues 165 to 185; that stretch reads LLFFIPLLLTWIYNIIVCALL. Over 186–276 the chain is Cytoplasmic; that stretch reads TKTFKEQAMN…IRKTPNIIWT (91 aa). Residues 277–297 form a helical membrane-spanning segment; sequence SIFFLFSFGFIWSWSILVIIL. Topologically, residues 298-306 are extracellular; the sequence is KYLSLDVKY. A helical membrane pass occupies residues 307-327; the sequence is ILMISYFFIPLHGCMNAVCFG. At 328–515 the chain is on the cytoplasmic side; that stretch reads VNDRLRMNLK…FCTIDEDETK (188 aa). Over residues 362–375 the composition is skewed to low complexity; sequence NGNNKNNKNNNGAN. Disordered stretches follow at residues 362–409 and 469–515; these read NGNN…YYQI and NNNN…DETK. Acidic residues predominate over residues 385–396; the sequence is SPDDDDDEDDDN. Low complexity-rich tracts occupy residues 397–407 and 469–504; these read NNNNYSDGNYY and NNNNNNNNNNNNNNNNNNNNNNINNNDNNNNNNNNN.

The protein belongs to the G-protein coupled receptor 5 family.

The protein localises to the membrane. Functionally, receptor for cAMP. The protein is Cyclic AMP receptor-like protein G (crlG) of Dictyostelium discoideum (Social amoeba).